A 408-amino-acid chain; its full sequence is Dual-specificity RNA methyltransferase RlmN (408 aa).

The active-site Proton acceptor is the Glu120. The Radical SAM core domain occupies 126–375; the sequence is EEGRGTLCIS…IRTPRGRDIL (250 aa). Cys133 and Cys378 are oxidised to a cystine. Cys140, Cys144, and Cys147 together coordinate [4Fe-4S] cluster. Residues 204–205, Ser236, 258–260, and Asn335 contribute to the S-adenosyl-L-methionine site; these read GE and SLH. The active-site S-methylcysteine intermediate is Cys378.

The protein belongs to the radical SAM superfamily. RlmN family. The cofactor is [4Fe-4S] cluster.

It is found in the cytoplasm. It carries out the reaction adenosine(2503) in 23S rRNA + 2 reduced [2Fe-2S]-[ferredoxin] + 2 S-adenosyl-L-methionine = 2-methyladenosine(2503) in 23S rRNA + 5'-deoxyadenosine + L-methionine + 2 oxidized [2Fe-2S]-[ferredoxin] + S-adenosyl-L-homocysteine. It catalyses the reaction adenosine(37) in tRNA + 2 reduced [2Fe-2S]-[ferredoxin] + 2 S-adenosyl-L-methionine = 2-methyladenosine(37) in tRNA + 5'-deoxyadenosine + L-methionine + 2 oxidized [2Fe-2S]-[ferredoxin] + S-adenosyl-L-homocysteine. Specifically methylates position 2 of adenine 2503 in 23S rRNA and position 2 of adenine 37 in tRNAs. m2A2503 modification seems to play a crucial role in the proofreading step occurring at the peptidyl transferase center and thus would serve to optimize ribosomal fidelity. This chain is Dual-specificity RNA methyltransferase RlmN, found in Rhizobium leguminosarum bv. trifolii (strain WSM2304).